The primary structure comprises 635 residues: 1-deoxy-D-xylulose-5-phosphate synthase (635 aa).

Thiamine diphosphate-binding positions include histidine 72 and 113–115; that span reads GHA. Aspartate 144 serves as a coordination point for Mg(2+). Residues 145–146, asparagine 174, tyrosine 286, and glutamate 369 each bind thiamine diphosphate; that span reads GA. Residue asparagine 174 participates in Mg(2+) binding.

It belongs to the transketolase family. DXPS subfamily. In terms of assembly, homodimer. The cofactor is Mg(2+). Thiamine diphosphate serves as cofactor.

The enzyme catalyses D-glyceraldehyde 3-phosphate + pyruvate + H(+) = 1-deoxy-D-xylulose 5-phosphate + CO2. The protein operates within metabolic intermediate biosynthesis; 1-deoxy-D-xylulose 5-phosphate biosynthesis; 1-deoxy-D-xylulose 5-phosphate from D-glyceraldehyde 3-phosphate and pyruvate: step 1/1. In terms of biological role, catalyzes the acyloin condensation reaction between C atoms 2 and 3 of pyruvate and glyceraldehyde 3-phosphate to yield 1-deoxy-D-xylulose-5-phosphate (DXP). This Gloeothece citriformis (strain PCC 7424) (Cyanothece sp. (strain PCC 7424)) protein is 1-deoxy-D-xylulose-5-phosphate synthase.